The sequence spans 261 residues: Adenosylcobinamide-GDP ribazoletransferase (261 aa).

7 helical membrane-spanning segments follow: residues Gly4–Trp26, Leu40–Leu60, Pro62–Leu82, Val110–Met130, Phe140–Ile160, Cys197–Phe217, and Ile237–Leu257.

The protein belongs to the CobS family. The cofactor is Mg(2+).

Its subcellular location is the cell membrane. The catalysed reaction is alpha-ribazole + adenosylcob(III)inamide-GDP = adenosylcob(III)alamin + GMP + H(+). The enzyme catalyses alpha-ribazole 5'-phosphate + adenosylcob(III)inamide-GDP = adenosylcob(III)alamin 5'-phosphate + GMP + H(+). It functions in the pathway cofactor biosynthesis; adenosylcobalamin biosynthesis; adenosylcobalamin from cob(II)yrinate a,c-diamide: step 7/7. Its function is as follows. Joins adenosylcobinamide-GDP and alpha-ribazole to generate adenosylcobalamin (Ado-cobalamin). Also synthesizes adenosylcobalamin 5'-phosphate from adenosylcobinamide-GDP and alpha-ribazole 5'-phosphate. This chain is Adenosylcobinamide-GDP ribazoletransferase, found in Halalkalibacterium halodurans (strain ATCC BAA-125 / DSM 18197 / FERM 7344 / JCM 9153 / C-125) (Bacillus halodurans).